We begin with the raw amino-acid sequence, 671 residues long: UvrABC system protein B (671 aa).

Residues 25-412 (EGIDAGLAHQ…AGRIVEQVVR (388 aa)) enclose the Helicase ATP-binding domain. 38–45 (GVTGSGKT) lines the ATP pocket. The Beta-hairpin motif lies at 91–114 (YYDYYQPEAYVPSSDTFIEKDASI). The region spanning 429-582 (QVDDLLSEIH…QIAFNLEHGI (154 aa)) is the Helicase C-terminal domain. A disordered region spans residues 601 to 624 (PGSRSKKRKGMAKAAEENARYENE). The span at 614–624 (AAEENARYENE) shows a compositional bias: basic and acidic residues. Residues 632–667 (NKRIRQLEEKMYQLARDLEFEAAAQMRDEIGKLRER) form the UVR domain.

It belongs to the UvrB family. In terms of assembly, forms a heterotetramer with UvrA during the search for lesions. Interacts with UvrC in an incision complex.

It localises to the cytoplasm. Its function is as follows. The UvrABC repair system catalyzes the recognition and processing of DNA lesions. A damage recognition complex composed of 2 UvrA and 2 UvrB subunits scans DNA for abnormalities. Upon binding of the UvrA(2)B(2) complex to a putative damaged site, the DNA wraps around one UvrB monomer. DNA wrap is dependent on ATP binding by UvrB and probably causes local melting of the DNA helix, facilitating insertion of UvrB beta-hairpin between the DNA strands. Then UvrB probes one DNA strand for the presence of a lesion. If a lesion is found the UvrA subunits dissociate and the UvrB-DNA preincision complex is formed. This complex is subsequently bound by UvrC and the second UvrB is released. If no lesion is found, the DNA wraps around the other UvrB subunit that will check the other stand for damage. The sequence is that of UvrABC system protein B from Pseudomonas syringae pv. syringae (strain B728a).